Here is a 481-residue protein sequence, read N- to C-terminus: 3-isopropylmalate dehydratase large subunit (481 aa).

Residues C357, C417, and C420 each contribute to the [4Fe-4S] cluster site.

This sequence belongs to the aconitase/IPM isomerase family. LeuC type 1 subfamily. Heterodimer of LeuC and LeuD. [4Fe-4S] cluster is required as a cofactor.

The catalysed reaction is (2R,3S)-3-isopropylmalate = (2S)-2-isopropylmalate. Its pathway is amino-acid biosynthesis; L-leucine biosynthesis; L-leucine from 3-methyl-2-oxobutanoate: step 2/4. Functionally, catalyzes the isomerization between 2-isopropylmalate and 3-isopropylmalate, via the formation of 2-isopropylmaleate. This Mycolicibacterium vanbaalenii (strain DSM 7251 / JCM 13017 / BCRC 16820 / KCTC 9966 / NRRL B-24157 / PYR-1) (Mycobacterium vanbaalenii) protein is 3-isopropylmalate dehydratase large subunit.